The sequence spans 477 residues: D(1B) dopamine receptor (477 aa).

Residues 1–39 (MLPPGSNGTAYPGQFALYQQLAQGNAVGGSAGAPPLGPS) are Extracellular-facing. N-linked (GlcNAc...) asparagine glycosylation is present at asparagine 7. Residues 40–66 (QVVTACLLTLLIIWTLLGNVLVCAAIV) form a helical membrane-spanning segment. The Cytoplasmic segment spans residues 67 to 77 (RSRHLRANMTN). A helical transmembrane segment spans residues 78-104 (VFIVSLAVSDLFVALLVMPWKAVAEVA). The Extracellular segment spans residues 105–114 (GYWPFGAFCD). Cysteines 113 and 217 form a disulfide. A helical transmembrane segment spans residues 115 to 136 (VWVAFDIMCSTASILNLCVISV). The Cytoplasmic portion of the chain corresponds to 137–158 (DRYWAISRPFRYKRKMTQRMAL). The chain crosses the membrane as a helical span at residues 159-180 (VMVGLAWTLSILISFIPVQLNW). Topologically, residues 181–223 (HRDQAASWGGLDLPNNLANWTPWEEDFWEPDVNAENCDSSLNR) are extracellular. N-linked (GlcNAc...) asparagine glycosylation is present at asparagine 222. A helical membrane pass occupies residues 224 to 246 (TYAISSSLISFYIPVAIMIVTYT). Topologically, residues 247 to 296 (RIYRIAQVQIRRISSLERAAEHAQSCRSSAACAPDTSLRASIKKETKVLK) are cytoplasmic. Residues 297-320 (TLSVIMGVFVCCWLPFFILNCMVP) form a helical membrane-spanning segment. Residues 321–340 (FCSGHPEGPPAGFPCVSETT) lie on the Extracellular side of the membrane. A helical transmembrane segment spans residues 341–360 (FDVFVWFGWANSSLNPVIYA). Over 361 to 477 (FNADFQKVFA…ITPFTPNGFH (117 aa)) the chain is Cytoplasmic. The S-palmitoyl cysteine moiety is linked to residue cysteine 375.

The protein belongs to the G-protein coupled receptor 1 family. Neuron-specific, localized primarily within limbic regions of the brain.

It is found in the cell membrane. In terms of biological role, dopamine receptor whose activity is mediated by G proteins which activate adenylyl cyclase. The polypeptide is D(1B) dopamine receptor (DRD5) (Homo sapiens (Human)).